The chain runs to 559 residues: Putative protease Do-like 3, mitochondrial (559 aa).

Residues 1-48 (MSFLCVRTVSRFRSLSRALAPGFLLLHGNAVPKTAVFFRQQSSNTRLF) constitute a mitochondrion transit peptide. The disordered stretch occupies residues 59–81 (ENNSKSALKNKLPPGKEVSSKDA). A serine protease region spans residues 100-292 (VFTVSSKPRL…FLNAIEESGE (193 aa)). Residues histidine 138, aspartate 169, and serine 247 each act as charge relay system in the active site. The PDZ domain occupies 300-380 (NLTYQKMDND…HLVSMKKPCE (81 aa)). The segment at 538 to 559 (SEDLQPKQQNKRSKVPPKSKEH) is disordered. The span at 546 to 559 (QNKRSKVPPKSKEH) shows a compositional bias: basic residues.

This sequence belongs to the peptidase S1C family.

The protein localises to the mitochondrion matrix. Putative serine protease. The chain is Putative protease Do-like 3, mitochondrial (DEGP3) from Arabidopsis thaliana (Mouse-ear cress).